Here is a 432-residue protein sequence, read N- to C-terminus: Trigger factor (432 aa).

One can recognise a PPIase FKBP-type domain in the interval 161-246 (EDRVTLDFTG…LKKVEERELP (86 aa)).

The protein belongs to the FKBP-type PPIase family. Tig subfamily.

Its subcellular location is the cytoplasm. It catalyses the reaction [protein]-peptidylproline (omega=180) = [protein]-peptidylproline (omega=0). Functionally, involved in protein export. Acts as a chaperone by maintaining the newly synthesized protein in an open conformation. Functions as a peptidyl-prolyl cis-trans isomerase. The protein is Trigger factor of Salmonella arizonae (strain ATCC BAA-731 / CDC346-86 / RSK2980).